The sequence spans 369 residues: Replication factor C subunit 5 (369 aa).

Residues 21–40 form a disordered region; the sequence is INKGKDVVGFGPPPQSKATP. 79–86 contacts ATP; that stretch reads GPPGTGKT.

It belongs to the activator 1 small subunits family. In terms of assembly, heterotetramer of subunits RFC2, RFC3, RFC4 and RFC5 that can form a complex with RFC1.

Its subcellular location is the nucleus. In terms of biological role, functions in cell replication and proliferation. May be involved in chromatin assembly and remodeling. Plays a role in the negative control of pathogenesis-related gene expression and systemic acquired resistance (SAR). The sequence is that of Replication factor C subunit 5 (RFC5) from Arabidopsis thaliana (Mouse-ear cress).